A 350-amino-acid chain; its full sequence is Atypical chemokine receptor 4 (350 aa).

The Extracellular segment spans residues 1 to 41; sequence MAVEYNQSTDYYYEENEMNDTHDYSQYEVICIKEEVRKFAK. 2 N-linked (GlcNAc...) asparagine glycosylation sites follow: Asn6 and Asn19. A helical transmembrane segment spans residues 42 to 66; sequence VFLPAFFTIAFIIGLAGNSTVVAIY. At 67–79 the chain is on the cytoplasmic side; that stretch reads AYYKKRRTKTDVY. A helical transmembrane segment spans residues 80–99; it reads ILNLAVADLFLLFTLPFWAV. Residues 100 to 113 are Extracellular-facing; sequence NAVHGWVLGKIMCK. A disulfide bridge connects residues Cys112 and Cys184. Residues 114-135 traverse the membrane as a helical segment; sequence VTSALYTVNFVSGMQFLACIST. Residues 136 to 153 are Cytoplasmic-facing; it reads DRYWAVTKAPSQSGVGKP. The helical transmembrane segment at 154–175 threads the bilayer; the sequence is CWVICFCVWVAAILLSIPQLVF. At 176 to 199 the chain is on the extracellular side; that stretch reads YTVNHKARCVPIFPYHLGTSMKAS. The helical transmembrane segment at 200–222 threads the bilayer; sequence IQILEICIGFIIPFLIMAVCYFI. The Cytoplasmic portion of the chain corresponds to 223 to 241; sequence TAKTLIKMPNIKKSQPLKV. A helical transmembrane segment spans residues 242-265; sequence LFTVVIVFIVTQLPYNIVKFCQAI. Over 266-283 the chain is Extracellular; the sequence is DIIYSLITDCDMSKRMDV. The chain crosses the membrane as a helical span at residues 284–306; that stretch reads AIQITESIALFHSCLNPVLYVFM. Residues 307–350 lie on the Cytoplasmic side of the membrane; the sequence is GTSFKNYIMKVAKKYGSWRRQRQNVEEIPFESEDATEPTSTFSI.

Belongs to the G-protein coupled receptor 1 family. Atypical chemokine receptor subfamily. As to quaternary structure, forms heteromers with CXCR3. Interacts with ARRB1 and ARRB2. The Ser/Thr residues in the C-terminal cytoplasmic tail may be phosphorylated. As to expression, expressed in circumvallate and fungiform papillae, olfactory epithelium and lung. Lower expression in liver, kidney and tongue epithelium bearing no taste papillae. Very low expression in the cerebral cortex of the brain.

It localises to the early endosome. Its subcellular location is the recycling endosome. The protein localises to the cell membrane. In terms of biological role, atypical chemokine receptor that controls chemokine levels and localization via high-affinity chemokine binding that is uncoupled from classic ligand-driven signal transduction cascades, resulting instead in chemokine sequestration, degradation, or transcytosis. Also known as interceptor (internalizing receptor) or chemokine-scavenging receptor or chemokine decoy receptor. Acts as a receptor for chemokines CCL2, CCL8, CCL13, CCL19, CCL21 and CCL25. Chemokine-binding does not activate G-protein-mediated signal transduction but instead induces beta-arrestin recruitment, leading to ligand internalization. Plays an important role in controlling the migration of immune and cancer cells that express chemokine receptors CCR7 and CCR9, by reducing the availability of CCL19, CCL21, and CCL25 through internalization. Negatively regulates CXCR3-induced chemotaxis. Regulates T-cell development in the thymus. In Bos taurus (Bovine), this protein is Atypical chemokine receptor 4 (ACKR4).